Reading from the N-terminus, the 277-residue chain is MTAPILVATLDTRGPAATLGTITRAVRAAEAAGFDAVLIDDRAAAGVQGRFETTTLTAALAAVTEHIGLITAPLPADQAPYHVSRITASLDHLAHGRTGWLASTDTTDPEGRTGELIDVVRGLWDSFDDDAFVHDRADGLYWRLPAVHQLDHQGRHFDVAGPLNVARPPQGHPVVAVTGPALAAAADLVLLDEAADAASVKQQAPHAKILLPLPGPAAELPADSPADGFTVALTGSDDPVLAALAARPGRPDRTAATTLRERLGLARPESRHALTTA.

In terms of assembly, heterodimer of two subunits, SnaA and SnaB. The cofactor is FMN.

Catalyzes the oxidation of the proline residue of pristinamycin IIB (PIIB) to pristinamycin IIA (PIIA). The chain is Pristinamycin IIA synthase subunit B (snaB) from Streptomyces pristinaespiralis.